An 89-amino-acid chain; its full sequence is Small ribosomal subunit protein uS15 (89 aa).

It belongs to the universal ribosomal protein uS15 family. In terms of assembly, part of the 30S ribosomal subunit. Forms a bridge to the 50S subunit in the 70S ribosome, contacting the 23S rRNA.

Its function is as follows. One of the primary rRNA binding proteins, it binds directly to 16S rRNA where it helps nucleate assembly of the platform of the 30S subunit by binding and bridging several RNA helices of the 16S rRNA. In terms of biological role, forms an intersubunit bridge (bridge B4) with the 23S rRNA of the 50S subunit in the ribosome. The polypeptide is Small ribosomal subunit protein uS15 (Escherichia coli O157:H7).